The following is a 705-amino-acid chain: Phosphoribosylformylglycinamidine synthase subunit PurL (705 aa).

His-32 is a catalytic residue. Tyr-35 contributes to the ATP binding site. Glu-76 is a Mg(2+) binding site. Substrate contacts are provided by residues 77 to 80 and Arg-99; that span reads SHNH. Catalysis depends on His-78, which acts as the Proton acceptor. Residue Asp-100 participates in Mg(2+) binding. Gln-224 is a binding site for substrate. Asp-252 contacts Mg(2+). 296-298 provides a ligand contact to substrate; sequence ESQ. ATP-binding residues include Asp-471 and Gly-508. Residue Asn-509 participates in Mg(2+) binding. Substrate is bound at residue Ser-511.

The protein belongs to the FGAMS family. As to quaternary structure, monomer. Part of the FGAM synthase complex composed of 1 PurL, 1 PurQ and 2 PurS subunits.

It localises to the cytoplasm. The enzyme catalyses N(2)-formyl-N(1)-(5-phospho-beta-D-ribosyl)glycinamide + L-glutamine + ATP + H2O = 2-formamido-N(1)-(5-O-phospho-beta-D-ribosyl)acetamidine + L-glutamate + ADP + phosphate + H(+). Its pathway is purine metabolism; IMP biosynthesis via de novo pathway; 5-amino-1-(5-phospho-D-ribosyl)imidazole from N(2)-formyl-N(1)-(5-phospho-D-ribosyl)glycinamide: step 1/2. Its function is as follows. Part of the phosphoribosylformylglycinamidine synthase complex involved in the purines biosynthetic pathway. Catalyzes the ATP-dependent conversion of formylglycinamide ribonucleotide (FGAR) and glutamine to yield formylglycinamidine ribonucleotide (FGAM) and glutamate. The FGAM synthase complex is composed of three subunits. PurQ produces an ammonia molecule by converting glutamine to glutamate. PurL transfers the ammonia molecule to FGAR to form FGAM in an ATP-dependent manner. PurS interacts with PurQ and PurL and is thought to assist in the transfer of the ammonia molecule from PurQ to PurL. The chain is Phosphoribosylformylglycinamidine synthase subunit PurL from Pyrococcus horikoshii (strain ATCC 700860 / DSM 12428 / JCM 9974 / NBRC 100139 / OT-3).